We begin with the raw amino-acid sequence, 108 residues long: U-scoloptoxin(10)-Sm1a (108 aa).

The signal sequence occupies residues 1 to 24 (MNKQWLHFFSVLLLCYVIEETCSL).

This sequence belongs to the scoloptoxin-10 family. Post-translationally, contains 3 disulfide bonds. As to expression, expressed by the venom gland.

Its subcellular location is the secreted. In Scolopendra morsitans (Tanzanian blue ringleg centipede), this protein is U-scoloptoxin(10)-Sm1a.